Reading from the N-terminus, the 917-residue chain is Interleukin-6 receptor subunit beta (917 aa).

The signal sequence occupies residues 1 to 22; the sequence is MSAPRIWLAQALLFFLTTESIG. The Extracellular portion of the chain corresponds to 23-617; that stretch reads QLLEPCGYIY…TPKFAQGEIE (595 aa). The Ig-like C2-type domain maps to 26-120; sequence EPCGYIYPEF…IEQNVYGVTM (95 aa). 2 disulfide bridges follow: cysteine 28/cysteine 54 and cysteine 48/cysteine 103. N-linked (GlcNAc...) asparagine glycans are attached at residues asparagine 43, asparagine 61, asparagine 83, and asparagine 131. 5 consecutive Fibronectin type-III domains span residues 128 to 221, 222 to 322, 327 to 417, 422 to 515, and 517 to 611; these read KPTN…VKPT, PPYN…TYED, PPSF…IPSP, AYSV…LKQA, and PARG…TPKF. Cysteine 134 and cysteine 144 are oxidised to a cystine. The N-linked (GlcNAc...) asparagine glycan is linked to asparagine 157. Residues cysteine 172 and cysteine 180 are joined by a disulfide bond. Asparagine 225 carries N-linked (GlcNAc...) asparagine glycosylation. Residues 308-312 carry the WSXWS motif motif; that stretch reads WSDWS. The N-linked (GlcNAc...) asparagine glycan is linked to asparagine 388. A disulfide bridge links cysteine 456 with cysteine 464. Residues asparagine 476 and asparagine 551 are each glycosylated (N-linked (GlcNAc...) asparagine). The chain crosses the membrane as a helical span at residues 618–639; the sequence is AIVVPVCLAFLLTTLLGVLFCF. At 640 to 917 the chain is on the cytoplasmic side; it reads NKRDLIKKHI…TVRQGGYMPQ (278 aa). The short motif at 649-657 is the Box 1 motif element; sequence IWPNVPDPS. Disordered stretches follow at residues 658–678 and 719–754; these read KSHI…NSKD and TEGH…TAST. A phosphoserine mark is found at serine 659 and serine 665. A compositionally biased stretch (low complexity) spans 729-753; sequence SSCMSSSRPSISSNEENESAQSTAS. Phosphoserine is present on residues serine 780, serine 787, serine 827, and serine 837. The interval 898-917 is disordered; that stretch reads EEIPKSYLPQTVRQGGYMPQ.

This sequence belongs to the type I cytokine receptor family. Type 2 subfamily. As to quaternary structure, component of a hexamer of two molecules each of IL6, IL6R and IL6ST; associates with the complex IL6:IL6R but does not interact with IL6. Forms heterodimers composed of LIFR and IL6ST (type I OSM receptor) which are activated by LIF and OSM. Also forms heterodimers composed of OSMR and IL6ST (type II receptor) which are activated by OSM but not by LIF. Interacts with HCK. Interacts with INPP5D/SHIP1. Interacts with SRC and YES. Interacts with ARMH4; this interaction prevents IL6ST protein homodimerization and bridges ARMH4 with IL6R and STAT3 and therefore inhibits phosphorylation of STAT3 at 'Tyr-705'. Phosphorylation of Ser-780 down-regulates cell surface expression. In terms of processing, heavily N-glycosylated. Glycosylation is required for protein stability and localization in plasma membrane but not for ligand binding. Expression not restricted to IL6-responsive cells. Found in tissues such as brain, heart, thymus, spleen, kidney, lung and liver. Found in all the cell lines tested except BaF-B03. Expressed paraventricular nucleus of the hypothalamus.

It localises to the cell membrane. Signal-transducing molecule. The receptor systems for IL6, LIF, OSM, CNTF, IL11, CTF1 and BSF3 can utilize IL6ST for initiating signal transmission. Binding of IL6 to IL6R induces IL6ST homodimerization and formation of a high-affinity receptor complex, which activates the intracellular JAK-MAPK and JAK-STAT3 signaling pathways. That causes phosphorylation of IL6ST tyrosine residues which in turn activates STAT3. In parallel, the IL6 signaling pathway induces the expression of two cytokine receptor signaling inhibitors, SOCS1 and SOCS3, which inhibit JAK and terminate the activity of the IL6 signaling pathway as a negative feedback loop. Also activates the yes-associated protein 1 (YAP) and NOTCH pathways to control inflammation-induced epithelial regeneration, independently of STAT3. Mediates signals which regulate immune response, hematopoiesis, pain control and bone metabolism. Has a role in embryonic development. Essential for survival of motor and sensory neurons and for differentiation of astrocytes. Required for expression of TRPA1 in nociceptive neurons. Required for the maintenance of PTH1R expression in the osteoblast lineage and for the stimulation of PTH-induced osteoblast differentiation. Required for normal trabecular bone mass and cortical bone composition. This chain is Interleukin-6 receptor subunit beta, found in Mus musculus (Mouse).